Consider the following 76-residue polypeptide: UPF0291 protein GK1331 (76 aa).

Residues 57-76 (PSGNDVTPKKLKESQRRRFH) form a disordered region. Residues 63–76 (TPKKLKESQRRRFH) are compositionally biased toward basic and acidic residues.

Belongs to the UPF0291 family.

It localises to the cytoplasm. In Geobacillus kaustophilus (strain HTA426), this protein is UPF0291 protein GK1331.